We begin with the raw amino-acid sequence, 462 residues long: Elongation factor 1-alpha 1 (462 aa).

Residue G2 is modified to N,N,N-trimethylglycine. The region spanning 5–242 (KTHINIVVIG…DCILPPTRPT (238 aa)) is the tr-type G domain. The tract at residues 14–21 (GHVDSGKS) is G1. 14-21 (GHVDSGKS) provides a ligand contact to GTP. Position 36 is an N6,N6,N6-trimethyllysine; alternate (K36). An N6,N6-dimethyllysine; alternate modification is found at K36. K36 bears the N6-methyllysine; alternate mark. K55 carries the N6,N6-dimethyllysine modification. The G2 stretch occupies residues 70–74 (GITID). An N6,N6,N6-trimethyllysine; by EEF1AKMT1 modification is found at K79. The G3 stretch occupies residues 91 to 94 (DAPG). 153-156 (NKMD) lines the GTP pocket. The interval 153–156 (NKMD) is G4. N6,N6,N6-trimethyllysine; alternate; by EEF1AKMT3 is present on K165. Residue K165 is modified to N6,N6-dimethyllysine; alternate; by EEF1AKMT3. An N6-acetyllysine; alternate modification is found at K165. K165 is modified (N6-methyllysine; alternate; by EEF1AKMT3). K172 carries the N6-acetyllysine modification. 194–196 (SGW) lines the GTP pocket. Residues 194–196 (SGW) form a G5 region. Position 273 is an N6-acetyllysine (K273). Position 300 is a phosphoserine; by TGFBR1 (S300). E301 is subject to 5-glutamyl glycerylphosphorylethanolamine. K318 is modified (N6,N6,N6-trimethyllysine; by EEF1AKMT2). Residue E374 is modified to 5-glutamyl glycerylphosphorylethanolamine. K385 is covalently cross-linked (Glycyl lysine isopeptide (Lys-Gly) (interchain with G-Cter in ubiquitin)). Residue K392 is modified to N6-acetyllysine; alternate. K392 is modified (N6-succinyllysine; alternate). T432 carries the phosphothreonine; by PASK modification. N6-acetyllysine is present on K439.

This sequence belongs to the TRAFAC class translation factor GTPase superfamily. Classic translation factor GTPase family. EF-Tu/EF-1A subfamily. In terms of assembly, found in a nuclear export complex with XPO5, EEF1A1, Ran and aminoacylated tRNA. Interacts with PARP1 and TXK. Interacts with KARS1. May interact with ERGIC2. Interacts with IFIT1 (via TPR repeats 4-7). Interacts with DLC1, facilitating distribution to the membrane periphery and ruffles upon growth factor stimulation. Interacts with ZPR1; the interaction occurs in a epidermal growth factor (EGF)-dependent manner. Interacts with PPP1R16B. Interacts with SPHK1 and SPHK2; both interactions increase SPHK1 and SPHK2 kinase activity. Interacts with guanyl-nucleotide exchange factor EEF1B2. Interacts (via middle-region) with HTATIP2 (via N-terminus); the interaction is direct and competes with EEF1A1 binding to guanyl-nucleotide exchange factor EEF1B2, thereby inhibiting GDP for GTP exchange and reactivation of EEF1A1. Interacts with tRNA. Post-translationally, ISGylated. In terms of processing, phosphorylated by TXK. Phosphorylation by PASK increases translation efficiency. Phosphorylated by ROCK2. Phosphorylation by TGFBR1 inhibits translation elongation. Trimethylated at Lys-79 by EEF1AKMT1. Methylated at Lys-165 by EEF1AKMT3, methylation by EEF1AKMT3 is dynamic as well as inducible by stress conditions, such as ER-stress, and plays a regulatory role on mRNA translation. Trimethylated at Lys-318 by EEF1AKMT2. Mono-, di-, and trimethylated at Lys-36 by EEF1AKMT4; trimethylated form is predominant. Methylation by EEF1AKMT4 contributes to the fine-tuning of translation rates for a subset of tRNAs. Trimethylated at Gly-2 by METTL13. Mono- and dimethylated at Lys-55 by METTL13; dimethylated form is predominant. Post-translationally, ubiquitinated at Lys-385 by RNF14 in response to ribosome collisions (ribosome stalling), leading to its degradation by the proteasome and rescue of stalled ribosomes.

It is found in the cytoplasm. Its subcellular location is the nucleus. The protein resides in the nucleolus. The protein localises to the cell membrane. It carries out the reaction GTP + H2O = GDP + phosphate + H(+). Its function is as follows. Translation elongation factor that catalyzes the GTP-dependent binding of aminoacyl-tRNA (aa-tRNA) to the A-site of ribosomes during the elongation phase of protein synthesis. Base pairing between the mRNA codon and the aa-tRNA anticodon promotes GTP hydrolysis, releasing the aa-tRNA from EEF1A1 and allowing its accommodation into the ribosome. The growing protein chain is subsequently transferred from the P-site peptidyl tRNA to the A-site aa-tRNA, extending it by one amino acid through ribosome-catalyzed peptide bond formation. Also plays a role in the positive regulation of IFNG transcription in T-helper 1 cells as part of an IFNG promoter-binding complex with TXK and PARP1. Also plays a role in cytoskeleton organization by promoting actin bundling. The chain is Elongation factor 1-alpha 1 (EEF1A1) from Cricetulus griseus (Chinese hamster).